The sequence spans 370 residues: Quinolinate synthase (370 aa).

2 residues coordinate iminosuccinate: His-62 and Ser-83. A [4Fe-4S] cluster-binding site is contributed by Cys-128. Residues 154-156 (YAN) and Ser-171 each bind iminosuccinate. [4Fe-4S] cluster is bound at residue Cys-215. Residues 241 to 243 (HPE) and Thr-258 contribute to the iminosuccinate site. A [4Fe-4S] cluster-binding site is contributed by Cys-312.

The protein belongs to the quinolinate synthase family. Type 1 subfamily. Requires [4Fe-4S] cluster as cofactor.

The protein resides in the cytoplasm. It carries out the reaction iminosuccinate + dihydroxyacetone phosphate = quinolinate + phosphate + 2 H2O + H(+). Its pathway is cofactor biosynthesis; NAD(+) biosynthesis; quinolinate from iminoaspartate: step 1/1. Functionally, catalyzes the condensation of iminoaspartate with dihydroxyacetone phosphate to form quinolinate. This is Quinolinate synthase from Neisseria gonorrhoeae (strain ATCC 700825 / FA 1090).